We begin with the raw amino-acid sequence, 117 residues long: MMEAKAVGKHLRISARKARLVADEVRGYDYKEAIDILRFTNKAASSMIINLLNSAVANAIQMNESLDPNSLFVKKIYVDDGPIMKRFRPRARGRASRIRKRLSHITVVVSEIEKKVS.

This sequence belongs to the universal ribosomal protein uL22 family. As to quaternary structure, part of the 50S ribosomal subunit.

In terms of biological role, this protein binds specifically to 23S rRNA; its binding is stimulated by other ribosomal proteins, e.g. L4, L17, and L20. It is important during the early stages of 50S assembly. It makes multiple contacts with different domains of the 23S rRNA in the assembled 50S subunit and ribosome. The globular domain of the protein is located near the polypeptide exit tunnel on the outside of the subunit, while an extended beta-hairpin is found that lines the wall of the exit tunnel in the center of the 70S ribosome. The sequence is that of Large ribosomal subunit protein uL22 from Leptospira biflexa serovar Patoc (strain Patoc 1 / ATCC 23582 / Paris).